The following is a 205-amino-acid chain: Deoxyuridine 5'-triphosphate nucleotidohydrolase (205 aa).

S54 is subject to Phosphoserine. Residues 126–128 (RSG), 140–143 (GVID), G151, and 199–200 (FG) each bind substrate.

This sequence belongs to the dUTPase family. Homotrimer. Mg(2+) serves as cofactor. Expressed in all tissues examined. Higher levels in heart and kidney.

It is found in the cytoplasm. The protein resides in the nucleus. The catalysed reaction is dUTP + H2O = dUMP + diphosphate + H(+). Its pathway is pyrimidine metabolism; dUMP biosynthesis; dUMP from dCTP (dUTP route): step 2/2. Functionally, catalyzes the cleavage of 2'-deoxyuridine 5'-triphosphate (dUTP) into 2'-deoxyuridine 5'-monophosphate (dUMP) and inorganic pyrophosphate and through its action efficiently prevents uracil misincorporation into DNA and at the same time provides dUMP, the substrate for de novo thymidylate biosynthesis. Inhibits peroxisome proliferator-activated receptor (PPAR) activity by binding of its N-terminal to PPAR, preventing the latter's dimerization with retinoid X receptor. Essential for embryonic development. In Rattus norvegicus (Rat), this protein is Deoxyuridine 5'-triphosphate nucleotidohydrolase (Dut).